Here is a 107-residue protein sequence, read N- to C-terminus: MVNFNQFLKQAQSMQKKMQEAQEQMANARYTGKAGGGLVEVIATGKGEVEKITIDESLLKPEEKEMLEDLIKVAFNDAKQKCDEDSQNSLSGALNGMSLPPGFKMPF.

This sequence belongs to the YbaB/EbfC family. In terms of assembly, homodimer.

It localises to the cytoplasm. The protein resides in the nucleoid. Functionally, binds to DNA and alters its conformation. May be involved in regulation of gene expression, nucleoid organization and DNA protection. The chain is Nucleoid-associated protein RF_1365 from Rickettsia felis (strain ATCC VR-1525 / URRWXCal2) (Rickettsia azadi).